The primary structure comprises 670 residues: DNA ligase (670 aa).

Residues 33 to 37 (DAEYD), 82 to 83 (SL), and Glu114 each bind NAD(+). Lys116 (N6-AMP-lysine intermediate) is an active-site residue. NAD(+) contacts are provided by Arg137, Glu174, Lys291, and Lys315. 4 residues coordinate Zn(2+): Cys409, Cys412, Cys427, and Cys433. The region spanning 593–670 (GVELPLEGKT…TEQDLLNLMK (78 aa)) is the BRCT domain.

Belongs to the NAD-dependent DNA ligase family. LigA subfamily. It depends on Mg(2+) as a cofactor. Mn(2+) serves as cofactor.

The enzyme catalyses NAD(+) + (deoxyribonucleotide)n-3'-hydroxyl + 5'-phospho-(deoxyribonucleotide)m = (deoxyribonucleotide)n+m + AMP + beta-nicotinamide D-nucleotide.. DNA ligase that catalyzes the formation of phosphodiester linkages between 5'-phosphoryl and 3'-hydroxyl groups in double-stranded DNA using NAD as a coenzyme and as the energy source for the reaction. It is essential for DNA replication and repair of damaged DNA. The chain is DNA ligase from Vibrio campbellii (strain ATCC BAA-1116).